A 331-amino-acid chain; its full sequence is Tetraacyldisaccharide 4'-kinase (331 aa).

57–64 (SVGGNGKT) contributes to the ATP binding site.

Belongs to the LpxK family.

The catalysed reaction is a lipid A disaccharide + ATP = a lipid IVA + ADP + H(+). Its pathway is glycolipid biosynthesis; lipid IV(A) biosynthesis; lipid IV(A) from (3R)-3-hydroxytetradecanoyl-[acyl-carrier-protein] and UDP-N-acetyl-alpha-D-glucosamine: step 6/6. Transfers the gamma-phosphate of ATP to the 4'-position of a tetraacyldisaccharide 1-phosphate intermediate (termed DS-1-P) to form tetraacyldisaccharide 1,4'-bis-phosphate (lipid IVA). The polypeptide is Tetraacyldisaccharide 4'-kinase (Histophilus somni (strain 2336) (Haemophilus somnus)).